A 247-amino-acid polypeptide reads, in one-letter code: 1-(5-phosphoribosyl)-5-[(5-phosphoribosylamino)methylideneamino] imidazole-4-carboxamide isomerase (247 aa).

The active-site Proton acceptor is Asp8. The active-site Proton donor is the Asp131.

Belongs to the HisA/HisF family.

The protein localises to the cytoplasm. It carries out the reaction 1-(5-phospho-beta-D-ribosyl)-5-[(5-phospho-beta-D-ribosylamino)methylideneamino]imidazole-4-carboxamide = 5-[(5-phospho-1-deoxy-D-ribulos-1-ylimino)methylamino]-1-(5-phospho-beta-D-ribosyl)imidazole-4-carboxamide. Its pathway is amino-acid biosynthesis; L-histidine biosynthesis; L-histidine from 5-phospho-alpha-D-ribose 1-diphosphate: step 4/9. This chain is 1-(5-phosphoribosyl)-5-[(5-phosphoribosylamino)methylideneamino] imidazole-4-carboxamide isomerase, found in Cupriavidus metallidurans (strain ATCC 43123 / DSM 2839 / NBRC 102507 / CH34) (Ralstonia metallidurans).